A 273-amino-acid polypeptide reads, in one-letter code: MSNPVVLNLHLISDSTCETVAAVARSALEHFKSVEVNEFVWSCINSYEQIDKIMLTIEKDKYNFIMYTMFDDDIRKYLKQKAGIHEIPCIPILSHVIREISCYLNIKKDPYINTSIGLDDEYFTRIDAINYTIAHDDGQNLWDIDQADIIILGVSRTSKSPTSIYLAYRGYRVVNIPLINSIELSVDLSKMKNKLIVGLTIDIDRLIEIRRARLVSMKNQNNYGYVDYEHVLMEIRETKKICAKNGWPIIDVTQKSVEEIAATIIQYFTKMQH.

An ADP-binding site is contributed by 153-160; it reads GVSRTSKS.

This sequence belongs to the pyruvate, phosphate/water dikinase regulatory protein family. PDRP subfamily.

It catalyses the reaction N(tele)-phospho-L-histidyl/L-threonyl-[pyruvate, phosphate dikinase] + ADP = N(tele)-phospho-L-histidyl/O-phospho-L-threonyl-[pyruvate, phosphate dikinase] + AMP + H(+). The enzyme catalyses N(tele)-phospho-L-histidyl/O-phospho-L-threonyl-[pyruvate, phosphate dikinase] + phosphate + H(+) = N(tele)-phospho-L-histidyl/L-threonyl-[pyruvate, phosphate dikinase] + diphosphate. Functionally, bifunctional serine/threonine kinase and phosphorylase involved in the regulation of the pyruvate, phosphate dikinase (PPDK) by catalyzing its phosphorylation/dephosphorylation. The sequence is that of Putative pyruvate, phosphate dikinase regulatory protein from Ehrlichia ruminantium (strain Welgevonden).